A 630-amino-acid polypeptide reads, in one-letter code: Prolactin receptor (630 aa).

The N-terminal stretch at 1–23 (MMTKVGEVLLLLLLPAFVPHTDG) is a signal peptide. The Extracellular segment spans residues 24 to 234 (THYSLPGKPT…VKVPEYLHRE (211 aa)). Fibronectin type-III domains follow at residues 31–128 (KPTE…IVQP) and 130–230 (PPEK…VPEY). Cystine bridges form between cysteine 37–cysteine 47 and cysteine 76–cysteine 87. 2 N-linked (GlcNAc...) asparagine glycosylation sites follow: asparagine 92 and asparagine 101. Residues aspartate 212 and histidine 213 each contribute to the Zn(2+) site. The WSXWS motif motif lies at 216–220 (WSEWS). Residues 235 to 258 (KSVWILVLVFSAFILLLLTWLIHM) form a helical membrane-spanning segment. The Cytoplasmic portion of the chain corresponds to 259-630 (NSHSLKHCML…DTATVFSVHT (372 aa)). Residues 267 to 275 (MLPPVPGPK) carry the Box 1 motif motif. The tract at residues 339 to 389 (KSIGSASDSDSGRGSCDSDNLLMDKSGAPKEEQQQQNQEGDQIGKETQGPK) is disordered. Residues 340-357 (SIGSASDSDSGRGSCDSD) show a composition bias toward low complexity. Positions 380–389 (QIGKETQGPK) are enriched in basic and acidic residues.

The protein belongs to the type I cytokine receptor family. Type 1 subfamily.

The protein resides in the membrane. This is a receptor for the anterior pituitary hormone prolactin. The polypeptide is Prolactin receptor (prlr) (Oreochromis niloticus (Nile tilapia)).